We begin with the raw amino-acid sequence, 358 residues long: Probable D-xylulose reductase A (358 aa).

Zn(2+) is bound by residues cysteine 47, histidine 72, and glutamate 73. 182-187 (GAGPVG) is a binding site for NAD(+).

The protein belongs to the zinc-containing alcohol dehydrogenase family. Requires Zn(2+) as cofactor.

It carries out the reaction xylitol + NAD(+) = D-xylulose + NADH + H(+). It functions in the pathway carbohydrate degradation; L-arabinose degradation via L-arabinitol; D-xylulose 5-phosphate from L-arabinose (fungal route): step 4/5. Functionally, xylitol dehydrogenase which catalyzes the conversion of xylitol to D-xylulose. Xylose is a major component of hemicelluloses such as xylan. Most fungi utilize D-xylose via three enzymatic reactions, xylose reductase (XR), xylitol dehydrogenase (XDH), and xylulokinase, to form xylulose 5-phosphate, which enters pentose phosphate pathway. The protein is Probable D-xylulose reductase A (xdhA) of Neosartorya fischeri (strain ATCC 1020 / DSM 3700 / CBS 544.65 / FGSC A1164 / JCM 1740 / NRRL 181 / WB 181) (Aspergillus fischerianus).